The chain runs to 199 residues: Hematopoietic prostaglandin D synthase (199 aa).

Residues 2-79 (PNYKLTYFNM…YLTKNTDLAG (78 aa)) form the GST N-terminal domain. Glutathione contacts are provided by residues tyrosine 8, arginine 14, tryptophan 39, 49–51 (GKI), and 63–64 (QS). Residues 81–199 (TEMEQCHVDA…WIKRRPQTKL (119 aa)) enclose the GST C-terminal domain.

This sequence belongs to the GST superfamily. Sigma family. In terms of assembly, homodimer. Requires glutathione as cofactor. Expressed in a number of megakaryocytic cell lines but not in platelets. Highly expressed in adipose tissue, macrophages and placenta. Also expressed at lower levels in lung, heart, lymph nodes, appendix, bone marrow and fetal liver.

The protein resides in the cytoplasm. The catalysed reaction is prostaglandin H2 = prostaglandin D2. It catalyses the reaction RX + glutathione = an S-substituted glutathione + a halide anion + H(+). The enzyme catalyses 2-glyceryl-prostaglandin H2 = 2-glyceryl-prostaglandin D2. With respect to regulation, prostaglandin PGD2 synthesis is stimulated by calcium and magnesium ions. One calcium or magnesium ion is bound between the subunits of the homodimer. The interactions with the protein are for the most part mediated via water molecules. Magnesium increases the affinity for glutathione, while calcium has no effect on the affinity for glutathione. Its function is as follows. Bifunctional enzyme which catalyzes both the conversion of PGH2 to PGD2, a prostaglandin involved in smooth muscle contraction/relaxation and a potent inhibitor of platelet aggregation, and the conjugation of glutathione with a wide range of aryl halides and organic isothiocyanates. Also exhibits low glutathione-peroxidase activity towards cumene hydroperoxide. The protein is Hematopoietic prostaglandin D synthase of Homo sapiens (Human).